The chain runs to 253 residues: Triosephosphate isomerase (253 aa).

9–11 (NWK) is a substrate binding site. H95 acts as the Electrophile in catalysis. Catalysis depends on E167, which acts as the Proton acceptor. Residues G173, S213, and 234-235 (GG) each bind substrate. S213 carries the post-translational modification Phosphoserine.

This sequence belongs to the triosephosphate isomerase family. In terms of assembly, homodimer.

The protein resides in the cytoplasm. The enzyme catalyses D-glyceraldehyde 3-phosphate = dihydroxyacetone phosphate. The protein operates within carbohydrate biosynthesis; gluconeogenesis. It functions in the pathway carbohydrate degradation; glycolysis; D-glyceraldehyde 3-phosphate from glycerone phosphate: step 1/1. Its function is as follows. Involved in the gluconeogenesis. Catalyzes stereospecifically the conversion of dihydroxyacetone phosphate (DHAP) to D-glyceraldehyde-3-phosphate (G3P). The polypeptide is Triosephosphate isomerase (Geobacillus kaustophilus (strain HTA426)).